The sequence spans 298 residues: GTP cyclohydrolase FolE2 (298 aa).

The protein belongs to the GTP cyclohydrolase IV family.

It carries out the reaction GTP + H2O = 7,8-dihydroneopterin 3'-triphosphate + formate + H(+). Its pathway is cofactor biosynthesis; 7,8-dihydroneopterin triphosphate biosynthesis; 7,8-dihydroneopterin triphosphate from GTP: step 1/1. Functionally, converts GTP to 7,8-dihydroneopterin triphosphate. This chain is GTP cyclohydrolase FolE2, found in Xylella fastidiosa (strain M23).